A 222-amino-acid chain; its full sequence is Cytidylate kinase (222 aa).

Position 10 to 18 (10 to 18 (GTSSSGKSV)) interacts with ATP.

This sequence belongs to the cytidylate kinase family. Type 1 subfamily.

It is found in the cytoplasm. The catalysed reaction is CMP + ATP = CDP + ADP. The enzyme catalyses dCMP + ATP = dCDP + ADP. The polypeptide is Cytidylate kinase (Mycoplasma capricolum subsp. capricolum (strain California kid / ATCC 27343 / NCTC 10154)).